Reading from the N-terminus, the 449-residue chain is Adenylosuccinate lyase (449 aa).

Residues 9 to 10, 75 to 77, and 102 to 103 each bind N(6)-(1,2-dicarboxyethyl)-AMP; these read RY, KHD, and TS. His150 serves as the catalytic Proton donor/acceptor. Gln224 contacts N(6)-(1,2-dicarboxyethyl)-AMP. Ser275 (proton donor/acceptor) is an active-site residue. Residues Ser276, 281–283, and 320–324 contribute to the N(6)-(1,2-dicarboxyethyl)-AMP site; these read KMN and SSERI.

The protein belongs to the lyase 1 family. Adenylosuccinate lyase subfamily. In terms of assembly, homotetramer. Residues from neighboring subunits contribute catalytic and substrate-binding residues to each active site.

It catalyses the reaction N(6)-(1,2-dicarboxyethyl)-AMP = fumarate + AMP. The enzyme catalyses (2S)-2-[5-amino-1-(5-phospho-beta-D-ribosyl)imidazole-4-carboxamido]succinate = 5-amino-1-(5-phospho-beta-D-ribosyl)imidazole-4-carboxamide + fumarate. It functions in the pathway purine metabolism; AMP biosynthesis via de novo pathway; AMP from IMP: step 2/2. Its pathway is purine metabolism; IMP biosynthesis via de novo pathway; 5-amino-1-(5-phospho-D-ribosyl)imidazole-4-carboxamide from 5-amino-1-(5-phospho-D-ribosyl)imidazole-4-carboxylate: step 2/2. Catalyzes two reactions in de novo purine nucleotide biosynthesis. Catalyzes the breakdown of 5-aminoimidazole- (N-succinylocarboxamide) ribotide (SAICAR or 2-[5-amino-1-(5-phospho-beta-D-ribosyl)imidazole-4-carboxamido]succinate) to 5-aminoimidazole-4-carboxamide ribotide (AICAR or 5-amino-1-(5-phospho-beta-D-ribosyl)imidazole-4-carboxamide) and fumarate, and of adenylosuccinate (ADS or N(6)-(1,2-dicarboxyethyl)-AMP) to adenosine monophosphate (AMP) and fumarate. In Methanothermobacter thermautotrophicus (strain ATCC 29096 / DSM 1053 / JCM 10044 / NBRC 100330 / Delta H) (Methanobacterium thermoautotrophicum), this protein is Adenylosuccinate lyase (purB).